Consider the following 342-residue polypeptide: Dihydroorotase (342 aa).

Zn(2+) contacts are provided by H13 and H15. Substrate contacts are provided by residues 15-17 (HLR) and N41. Positions 98, 135, and 173 each coordinate Zn(2+). K98 is subject to N6-carboxylysine. H135 contributes to the substrate binding site. Residue L218 coordinates substrate. Residue D246 participates in Zn(2+) binding. The active site involves D246. H250 and A262 together coordinate substrate.

Belongs to the metallo-dependent hydrolases superfamily. DHOase family. Class II DHOase subfamily. Homodimer. The cofactor is Zn(2+).

It carries out the reaction (S)-dihydroorotate + H2O = N-carbamoyl-L-aspartate + H(+). Its pathway is pyrimidine metabolism; UMP biosynthesis via de novo pathway; (S)-dihydroorotate from bicarbonate: step 3/3. Catalyzes the reversible cyclization of carbamoyl aspartate to dihydroorotate. The chain is Dihydroorotase from Vibrio cholerae serotype O1 (strain ATCC 39315 / El Tor Inaba N16961).